A 716-amino-acid polypeptide reads, in one-letter code: Exocyst complex component 8 (716 aa).

Position 15 is a phosphoserine (Ser-15). Low complexity predominate over residues 110-119 (STGEDTAGAG). The interval 110–149 (STGEDTAGAGPRERGAAQAGFLPGPAGVPREGPGTGEEGK) is disordered. One can recognise a PH domain in the interval 173–273 (YLVYNGDLVE…WLEVLEETKR (101 aa)). The segment covering 275–284 (LSDKRRREQE) has biased composition (basic and acidic residues). Residues 275–319 (LSDKRRREQEEAAALRAPPPVTSKGSNPFEDEAEEELATPEAEEE) are disordered. Residues 303-319 (FEDEAEEELATPEAEEE) are compositionally biased toward acidic residues. Thr-313 bears the Phosphothreonine mark.

Belongs to the EXO84 family. As to quaternary structure, the exocyst complex is composed of EXOC1, EXOC2, EXOC3, EXOC4, EXOC5, EXOC6, EXOC7 and EXOC8. Interacts (via PH domain) with GTP-bound RALA and RALB. Interacts with SH3BP1; required for the localization of both SH3BP1 and the exocyst to the leading edge of migrating cells.

It localises to the cytoplasm. The protein resides in the perinuclear region. The protein localises to the cell projection. It is found in the growth cone. Component of the exocyst complex involved in the docking of exocytic vesicles with fusion sites on the plasma membrane. In Rattus norvegicus (Rat), this protein is Exocyst complex component 8 (Exoc8).